Reading from the N-terminus, the 153-residue chain is NADPH-dependent 7-cyano-7-deazaguanine reductase (153 aa).

The active-site Thioimide intermediate is the Cys51. The Proton donor role is filled by Asp58. Substrate-binding positions include 73–75 (VES) and 92–93 (HE).

This sequence belongs to the GTP cyclohydrolase I family. QueF type 1 subfamily.

It is found in the cytoplasm. The catalysed reaction is 7-aminomethyl-7-carbaguanine + 2 NADP(+) = 7-cyano-7-deazaguanine + 2 NADPH + 3 H(+). The protein operates within tRNA modification; tRNA-queuosine biosynthesis. Its function is as follows. Catalyzes the NADPH-dependent reduction of 7-cyano-7-deazaguanine (preQ0) to 7-aminomethyl-7-deazaguanine (preQ1). This is NADPH-dependent 7-cyano-7-deazaguanine reductase from Granulibacter bethesdensis (strain ATCC BAA-1260 / CGDNIH1).